Here is a 323-residue protein sequence, read N- to C-terminus: Formimidoylglutamase (323 aa).

Mn(2+)-binding residues include His-131, Asp-157, His-159, Asp-161, Cys-245, and Asp-247.

The protein belongs to the arginase family. The cofactor is Mn(2+).

It catalyses the reaction N-formimidoyl-L-glutamate + H2O = formamide + L-glutamate. The protein operates within amino-acid degradation; L-histidine degradation into L-glutamate; L-glutamate from N-formimidoyl-L-glutamate (hydrolase route): step 1/1. Its function is as follows. Catalyzes the conversion of N-formimidoyl-L-glutamate to L-glutamate and formamide. This is Formimidoylglutamase from Geobacillus kaustophilus (strain HTA426).